The primary structure comprises 472 residues: MNQLQDKDRELAPLERKFNHFICSFEQFFKSQATASITLLLAAIAAMVIANSQWHEGYEEISHMAFSISLGDFAISHSLHTWVNDGLMVLFFFLLGLEIKYECLVGDLKDFRDSSLVIAMAIGGMLLPAGIYAGVALTGVDEALRGWGIPMATDTAFALGILALLGSKAPRSAAVTLSALAIVDDMGAVAVIGLFYTENIHLTSLMYAGLTLGGLFALNVLGFRRPIFYLVGGILLWWFVLQSGVHATAAGILAALAVPTKPYAQSTWFATNMRSVLNRFEKNDRKDKSILEQQDQHELVEQAQDIAAMTTTPIQRWGHVLNRPVSLIILPIFAFINAGVALPDDLSKIFDSVVFIGVASAMVLGKVIGISVFAWIAVKSGFSRLPNGLAFGHVFALACLAGVGFTMSLFIASLGFAGHPELLAQAKLGILAGSVIAAIIGTTLFLMIKHKVHEEPKDERHNKAGLPQTDQE.

Helical transmembrane passes span 34–54 (TASI…NSQW), 86–106 (GLMV…CLVG), 116–136 (LVIA…AGVA), 146–166 (GWGI…ALLG), 175–195 (VTLS…IGLF), 203–223 (TSLM…VLGF), 227–247 (IFYL…GVHA), 324–344 (PVSL…ALPD), 353–373 (VVFI…ISVF), 394–414 (VFAL…IASL), and 428–448 (LGIL…FLMI).

The protein belongs to the NhaA Na(+)/H(+) (TC 2.A.33) antiporter family.

Its subcellular location is the cell inner membrane. It catalyses the reaction Na(+)(in) + 2 H(+)(out) = Na(+)(out) + 2 H(+)(in). Functionally, na(+)/H(+) antiporter that extrudes sodium in exchange for external protons. This is Na(+)/H(+) antiporter NhaA 1 from Pseudoalteromonas atlantica (strain T6c / ATCC BAA-1087).